The chain runs to 1637 residues: Surface protein (1637 aa).

The signal sequence occupies residues 1–48 (MNKNSKKKLDFLPNKLNKYSIRRFTVGTASILVGATLIFGVANDQAEA). 3 disordered regions span residues 49-305 (AENN…RTQV), 689-719 (VQKG…GEPT), and 739-1611 (PQGH…NGTL). A compositionally biased stretch (basic and acidic residues) spans 56–65 (KQDDSSDASK). Positions 69–83 (NVQTIEQSSANSNES) are enriched in polar residues. 3 stretches are compositionally biased toward basic and acidic residues: residues 90–106 (DVTK…EKAN), 127–180 (EAPK…KATT), and 188–264 (ETSK…KVET). Residues 289 to 298 (AKSNSNAQPS) are compositionally biased toward polar residues. 5 consecutive G5 domains span residues 654–737 (QADL…TPEE), 783–865 (HGPK…GGEE), 911–993 (HGPK…GGEE), 1039–1121 (HGPK…GGEE), and 1167–1250 (HGPK…APEI). A compositionally biased stretch (basic and acidic residues) spans 779-817 (DVTKHGPKAGEPEVTKEEIPFEKKREFNPDLKPGEEKVT). Residues 818 to 832 (QEGQTGEKTTTTPTT) show a composition bias toward low complexity. A compositionally biased stretch (basic and acidic residues) spans 907 to 945 (DVTKHGPKAGEPEVTKEEIPFEKKREFNPDLKPGEEKVT). The span at 946-960 (QEGQTGEKTTTTPTT) shows a compositional bias: low complexity. A compositionally biased stretch (basic and acidic residues) spans 1035–1073 (DVTKHGPKAGEPEVTKEEIPFEKKREFNPDLKPGEEKVT). Over residues 1074–1088 (QEGQTGEKTTTTPTT) the composition is skewed to low complexity. Positions 1163-1189 (DVTKHGPKAGEPEVTKEEIPYETKRVL) are enriched in basic and acidic residues. Acidic residues-rich tracts occupy residues 1282 to 1291 (TGEIIEEPQD) and 1302 to 1580 (SDAD…DSDS). 141 consecutive repeat copies span residues 1301-1302 (DS), 1303-1304 (DA), 1305-1306 (DS), 1307-1308 (DS), 1309-1310 (DA), 1311-1312 (DS), 1313-1314 (DS), 1315-1316 (DA), 1317-1318 (DS), 1319-1320 (DS), 1321-1322 (DA), 1323-1324 (DS), 1325-1326 (DS), 1327-1328 (DA), 1329-1330 (DS), 1331-1332 (DS), 1333-1334 (DS), 1335-1336 (DS), 1337-1338 (DS), 1339-1340 (DS), 1341-1342 (DS), 1343-1344 (DS), 1345-1346 (DA), 1347-1348 (DS), 1349-1350 (DS), 1351-1352 (DS), 1353-1354 (DS), 1355-1356 (DS), 1357-1358 (DA), 1359-1360 (DS), 1361-1362 (DS), 1363-1364 (DA), 1365-1366 (DS), 1367-1368 (DS), 1369-1370 (DA), 1371-1372 (DS), 1373-1374 (DS), 1375-1376 (DS), 1377-1378 (DA), 1379-1380 (DS), 1381-1382 (DS), 1383-1384 (DS), 1385-1386 (DA), 1387-1388 (DS), 1389-1390 (DS), 1391-1392 (DS), 1393-1394 (DS), 1395-1396 (DS), 1397-1398 (DA), 1399-1400 (DS), 1401-1402 (DS), 1403-1404 (DS), 1405-1406 (DS), 1407-1408 (DS), 1409-1410 (DA), 1411-1412 (DS), 1413-1414 (DS), 1415-1416 (DA), 1417-1418 (DS), 1419-1420 (DS), 1421-1422 (DS), 1423-1424 (DS), 1425-1426 (DS), 1427-1428 (DA), 1429-1430 (DS), 1431-1432 (DS), 1433-1434 (DS), 1435-1436 (DS), 1437-1438 (DS), 1439-1440 (DA), 1441-1442 (DS), 1443-1444 (DS), 1445-1446 (DA), 1447-1448 (DS), 1449-1450 (DS), 1451-1452 (DA), 1453-1454 (DS), 1455-1456 (DS), 1457-1458 (DA), 1459-1460 (DS), 1461-1462 (DS), 1463-1464 (DS), 1465-1466 (DS), 1467-1468 (DS), 1469-1470 (DA), 1471-1472 (DS), 1473-1474 (DS), 1475-1476 (DA), 1477-1478 (DS), 1479-1480 (DS), 1481-1482 (DA), 1483-1484 (DS), 1485-1486 (DS), 1487-1488 (DA), 1489-1490 (DS), 1491-1492 (DS), 1493-1494 (DS), 1495-1496 (DS), 1497-1498 (DS), 1499-1500 (DA), 1501-1502 (DS), 1503-1504 (DS), 1505-1506 (DS), 1507-1508 (DS), 1509-1510 (DS), 1511-1512 (DS), 1513-1514 (DA), 1515-1516 (DS), 1517-1518 (DS), 1519-1520 (DA), 1521-1522 (DS), 1523-1524 (DS), 1525-1526 (DS), 1527-1528 (DA), 1529-1530 (DS), 1531-1532 (DS), 1533-1534 (DA), 1535-1536 (DS), 1537-1538 (DS), 1539-1540 (DA), 1541-1542 (DG), 1543-1544 (DS), 1545-1546 (DA), 1547-1548 (DS), 1549-1550 (DS), 1551-1552 (DA), 1553-1554 (DS), 1555-1556 (DS), 1557-1558 (DS), 1559-1560 (DS), 1561-1562 (DS), 1563-1564 (DS), 1565-1566 (DS), 1567-1568 (DS), 1569-1570 (DA), 1571-1572 (DS), 1573-1574 (DS), 1575-1576 (DS), 1577-1578 (DS), 1579-1580 (DS), and 1581-1582 (DA). The interval 1301-1582 (DSDADSDSDA…DSDSDSDSDA (282 aa)) is 141 X 2 AA tandem repeats of D-[SAG]. Basic and acidic residues predominate over residues 1581–1599 (DADRDHNDKTDKPNNKELP). The LPXTG sorting signal signature appears at 1598 to 1602 (LPDTG). Pentaglycyl murein peptidoglycan amidated threonine is present on T1601. Positions 1602–1637 (GNDAQNNGTLFGSLFAALGGLFLVGRRRKNKNNEEK) are cleaved as a propeptide — removed by sortase.

Its subcellular location is the secreted. It localises to the cell wall. Functionally, could have a role in preventing adhesion at some stages during an infection. This chain is Surface protein (pls), found in Staphylococcus aureus.